Reading from the N-terminus, the 346-residue chain is NADH-quinone oxidoreductase subunit H (346 aa).

The next 8 membrane-spanning stretches (helical) occupy residues 6–26 (ILFW…ACAY), 76–96 (VMYL…WSVV), 128–148 (ILFL…AGWA), 166–186 (ISYE…SGSL), 198–218 (LWNI…VAMF), 260–280 (ITMS…PFGI), 289–309 (LFGL…FLWV), and 324–344 (LGWK…SIYI).

It belongs to the complex I subunit 1 family. As to quaternary structure, NDH-1 is composed of 14 different subunits. Subunits NuoA, H, J, K, L, M, N constitute the membrane sector of the complex.

The protein resides in the cell inner membrane. The catalysed reaction is a quinone + NADH + 5 H(+)(in) = a quinol + NAD(+) + 4 H(+)(out). Functionally, NDH-1 shuttles electrons from NADH, via FMN and iron-sulfur (Fe-S) centers, to quinones in the respiratory chain. The immediate electron acceptor for the enzyme in this species is believed to be ubiquinone. Couples the redox reaction to proton translocation (for every two electrons transferred, four hydrogen ions are translocated across the cytoplasmic membrane), and thus conserves the redox energy in a proton gradient. This subunit may bind ubiquinone. This Leptospira interrogans serogroup Icterohaemorrhagiae serovar copenhageni (strain Fiocruz L1-130) protein is NADH-quinone oxidoreductase subunit H.